A 163-amino-acid chain; its full sequence is MKIAVYPGSFDPITNGHLDVIQRAAQVFDQVVVAVAHSSTKEPLFSIEERLDMLRVVLQKLPNVRVDAYRGLTVRYAREQGARALIRGLRAVSDFEYEFTMALTNKKLAPEIETVFLMTEAKYSFISSGSVKEVARYGGCLEDMVPVPVERILRDKFGMRGEG.

Ser-9 lines the substrate pocket. ATP contacts are provided by residues 9 to 10 (SF) and His-17. Substrate contacts are provided by Lys-41, Thr-73, and Arg-87. ATP contacts are provided by residues 88–90 (GLR), Glu-98, and 123–129 (YSFISSG).

It belongs to the bacterial CoaD family. In terms of assembly, homohexamer. Requires Mg(2+) as cofactor.

Its subcellular location is the cytoplasm. It carries out the reaction (R)-4'-phosphopantetheine + ATP + H(+) = 3'-dephospho-CoA + diphosphate. It participates in cofactor biosynthesis; coenzyme A biosynthesis; CoA from (R)-pantothenate: step 4/5. Reversibly transfers an adenylyl group from ATP to 4'-phosphopantetheine, yielding dephospho-CoA (dPCoA) and pyrophosphate. In Desulforudis audaxviator (strain MP104C), this protein is Phosphopantetheine adenylyltransferase.